We begin with the raw amino-acid sequence, 474 residues long: PRAME family member 7 (474 aa).

One copy of the LRR 1; degenerate repeat lies at 97 to 122 (QSKLQVLDLRNVDENFCDIFSGATAS). An LRR 2; degenerate repeat occupies 177–201 (HVCCKELQVFGMPIHSIIEVLNMVE). The LRR 3; degenerate repeat unit spans residues 202–228 (LDCIQEVEVCCPWELSTLVKFAPYLGQ). One copy of the LRR 4; degenerate repeat lies at 229–264 (MRNLRKLVLFNIRASACIPPDNKGQFIARFTSQFLK). 5 LRR repeats span residues 265 to 290 (LDYF…LRCL), 291 to 322 (QASL…RQLK), 323 to 341 (ELDL…PLTG), 347 to 374 (VATL…VLSR), and 375 to 399 (CSQL…LLRH).

This sequence belongs to the PRAME family.

This is PRAME family member 7 from Homo sapiens (Human).